The sequence spans 795 residues: MKFSELWLREWVNPAIDSEALVDQITMSGLEVDGVEPVAGRFTGVVVGRVVECRQHSNADKLRVTKVDVGGERLLDIVCGAPNCRAGLRVAVAMLGAVLPGDFKIKVAKLRGEPSEGMLCSFSELGITGDHDGIIELPAEAPIGQDIRDYLQLDDNTIDISVTPNRADCLGLLGIARDVAVRNRLPLHMPAIETVTPEISDTLPIRVDAVEACPRYLGRVVKNINVSAATPLWMKEKLRRCGLRSVDAVVDITNYVLLELGQPMHAFDRARIEGGIVVRHARQDETLTLLDGSDVTLSLDTLVIADHGQALAMAGIFGGGAYCISPTTRDVVLECAFFNPLAITGRARRYGLHTDASHRYERGVDPALQPRAMERATALLVAICGGQPGPVIDVTSASAQPQPATITLRRKTLDRLIGHVIPDEDVSDILTRLGCQVSRTAEGWQAVAPSWRFDMAIEEDLIEEVARVYGYDAIPNVPVRANLVMPHHREAALPLARVKTLLVDRGYQEAITYSFVDPKTQVLLHPQQAPLVLPSPISQDMSAMRLSLWTGLLGAVVYNQNRQQQRVRLFESGLRFVPDNAADLGIRQDLMLAGVIAGPRSDEHWDQLRQPVDFYDAKGDLEAILELTGKLDDIEFRAQRHPALHPGQSAAIYLNNEAIGFIGVIHPELEAKLNLNGCTLVFELLWEKVAERKVPEANDISRFPANRRDIAVVVADDVAVADIIAECKKVGANQLVGVNLFDVYRGRGVAEGFKSLAISLILQDTARTLEEEEIAATVAKCVAALKQRFQASLRD.

The region spanning 39–148 (AGRFTGVVVG…AEAPIGQDIR (110 aa)) is the tRNA-binding domain. Residues 401–476 (PQPATITLRR…RVYGYDAIPN (76 aa)) enclose the B5 domain. Residues Asp-454, Asp-460, Glu-463, and Glu-464 each coordinate Mg(2+). Positions 701–794 (SRFPANRRDI…LKQRFQASLR (94 aa)) constitute an FDX-ACB domain.

It belongs to the phenylalanyl-tRNA synthetase beta subunit family. Type 1 subfamily. As to quaternary structure, tetramer of two alpha and two beta subunits. Requires Mg(2+) as cofactor.

The protein resides in the cytoplasm. It carries out the reaction tRNA(Phe) + L-phenylalanine + ATP = L-phenylalanyl-tRNA(Phe) + AMP + diphosphate + H(+). This Sodalis glossinidius (strain morsitans) protein is Phenylalanine--tRNA ligase beta subunit.